A 256-amino-acid polypeptide reads, in one-letter code: Type III pantothenate kinase (256 aa).

6-13 (DVGNTNMV) is a binding site for ATP. Substrate contacts are provided by residues Tyr100 and 107 to 110 (GADR). The active-site Proton acceptor is the Asp109. Asp129 provides a ligand contact to K(+). Thr132 contributes to the ATP binding site. Thr184 provides a ligand contact to substrate.

This sequence belongs to the type III pantothenate kinase family. As to quaternary structure, homodimer. NH4(+) serves as cofactor. Requires K(+) as cofactor.

The protein localises to the cytoplasm. The catalysed reaction is (R)-pantothenate + ATP = (R)-4'-phosphopantothenate + ADP + H(+). The protein operates within cofactor biosynthesis; coenzyme A biosynthesis; CoA from (R)-pantothenate: step 1/5. Its function is as follows. Catalyzes the phosphorylation of pantothenate (Pan), the first step in CoA biosynthesis. This chain is Type III pantothenate kinase, found in Clostridioides difficile (strain 630) (Peptoclostridium difficile).